A 557-amino-acid polypeptide reads, in one-letter code: Tektin-5 (557 aa).

Positions 302-386 (DNIRHAQNMR…LLERAIVAKE (85 aa)) form a coiled coil. 6 tandem repeats follow at residues 507–512 (CSGSAL), 513–518 (CKGPAS), 519–524 (CGGGAS), 525–530 (CGGGAS), 531–536 (CGGHAP), and 537–541 (CGSAL). Residues 507–541 (CSGSALCKGPASCGGGASCGGGASCGGHAPCGSAL) form a 6 X 6 AA approximate tandem repeats of C-[GSK]-G-[GSPH]-A-[SLP] region.

Belongs to the tektin family. In terms of assembly, microtubule inner protein component of sperm flagellar doublet microtubules. Interacts with TEKT3. In terms of processing, ubiquitinated, leading to its degradation. Deubiquitinated by USP16, promoting its stability. In terms of tissue distribution, strongly expressed in germ cells of the testis (at protein level). Expressed in spermatozoa. Also detected in brain.

The protein localises to the cytoplasm. It localises to the cytoskeleton. The protein resides in the flagellum axoneme. Its function is as follows. Sperm-specific microtubule inner protein (MIP) part of the dynein-decorated doublet microtubules (DMTs) in flagellar axoneme. Forms an extensive interaction network in different conformations that reinforces the helix bundle composed by other tektin proteins (TEKT1 to TEKT4) and MIPs to anchor the tektin bundle onto the tubulin wall of A-tubule of the sperm flagellum. The sequence is that of Tektin-5 from Mus musculus (Mouse).